Here is a 638-residue protein sequence, read N- to C-terminus: Zinc finger protein 143 (638 aa).

M1 carries the N-acetylmethionine modification. K213 is covalently cross-linked (Glycyl lysine isopeptide (Lys-Gly) (interchain with G-Cter in SUMO2)). C2H2-type zinc fingers lie at residues 237-261 (FRCEYDGCGKLYTTAHHLKVHERSH), 267-291 (YQCEHAGCGKAFATGYGLKSHVRTH), 297-321 (YRCSEDNCTKSFKTSGDLQKHIRTH), and 327-351 (FKCPFEGCGRSFTTSNIRKVHVRTH). T352 bears the Phosphothreonine mark. 3 consecutive C2H2-type zinc fingers follow at residues 357–381 (YYCTEPGCGRAFASATNYKNHVRIH), 387–411 (YVCTVPGCDKRFTEYSSLYKHHVVH), and 417–440 (YNCNHCGKTYKQISTLAMHKRTAH). K406 is covalently cross-linked (Glycyl lysine isopeptide (Lys-Gly) (interchain with G-Cter in SUMO2)).

The protein belongs to the GLI C2H2-type zinc-finger protein family. Interacts with CHD8. Forms a complex with HCFC1 and ZNF143. Expressed in all tissues tested, with the strongest expression in ovary.

The protein resides in the nucleus. Its function is as follows. Transcriptional activator. Activates the gene for selenocysteine tRNA (tRNAsec). Binds to the SPH motif of small nuclear RNA (snRNA) gene promoters. Participates in efficient U6 RNA polymerase III transcription via its interaction with CHD8. In complex with HCFC1 and ZNF143, regulates the expression of several genes, including AP2S1, ESCO2, OPHN1, RBL1, UBXN8 and ZNF32. The chain is Zinc finger protein 143 (ZNF143) from Homo sapiens (Human).